A 420-amino-acid chain; its full sequence is Serine hydroxymethyltransferase (420 aa).

Residues Leu-121 and 125–127 (GHL) contribute to the (6S)-5,6,7,8-tetrahydrofolate site. The residue at position 230 (Lys-230) is an N6-(pyridoxal phosphate)lysine. (6S)-5,6,7,8-tetrahydrofolate contacts are provided by residues Glu-246 and 354–356 (SPF).

The protein belongs to the SHMT family. Homodimer. It depends on pyridoxal 5'-phosphate as a cofactor.

It is found in the cytoplasm. It catalyses the reaction (6R)-5,10-methylene-5,6,7,8-tetrahydrofolate + glycine + H2O = (6S)-5,6,7,8-tetrahydrofolate + L-serine. It functions in the pathway one-carbon metabolism; tetrahydrofolate interconversion. The protein operates within amino-acid biosynthesis; glycine biosynthesis; glycine from L-serine: step 1/1. In terms of biological role, catalyzes the reversible interconversion of serine and glycine with tetrahydrofolate (THF) serving as the one-carbon carrier. This reaction serves as the major source of one-carbon groups required for the biosynthesis of purines, thymidylate, methionine, and other important biomolecules. Also exhibits THF-independent aldolase activity toward beta-hydroxyamino acids, producing glycine and aldehydes, via a retro-aldol mechanism. The sequence is that of Serine hydroxymethyltransferase from Rickettsia canadensis (strain McKiel).